Here is a 418-residue protein sequence, read N- to C-terminus: Exodeoxyribonuclease 7 large subunit (418 aa).

The protein belongs to the XseA family. Heterooligomer composed of large and small subunits.

The protein resides in the cytoplasm. The catalysed reaction is Exonucleolytic cleavage in either 5'- to 3'- or 3'- to 5'-direction to yield nucleoside 5'-phosphates.. Bidirectionally degrades single-stranded DNA into large acid-insoluble oligonucleotides, which are then degraded further into small acid-soluble oligonucleotides. The protein is Exodeoxyribonuclease 7 large subunit of Acaryochloris marina (strain MBIC 11017).